A 143-amino-acid polypeptide reads, in one-letter code: Nucleoside diphosphate kinase (143 aa).

ATP contacts are provided by lysine 11, phenylalanine 59, arginine 87, threonine 93, arginine 104, and asparagine 114. The Pros-phosphohistidine intermediate role is filled by histidine 117.

Belongs to the NDK family. As to quaternary structure, homotetramer. The cofactor is Mg(2+).

It is found in the cytoplasm. The enzyme catalyses a 2'-deoxyribonucleoside 5'-diphosphate + ATP = a 2'-deoxyribonucleoside 5'-triphosphate + ADP. It carries out the reaction a ribonucleoside 5'-diphosphate + ATP = a ribonucleoside 5'-triphosphate + ADP. In terms of biological role, major role in the synthesis of nucleoside triphosphates other than ATP. The ATP gamma phosphate is transferred to the NDP beta phosphate via a ping-pong mechanism, using a phosphorylated active-site intermediate. The polypeptide is Nucleoside diphosphate kinase (Shewanella loihica (strain ATCC BAA-1088 / PV-4)).